The chain runs to 476 residues: Aspartyl/glutamyl-tRNA(Asn/Gln) amidotransferase subunit B (476 aa).

The protein belongs to the GatB/GatE family. GatB subfamily. In terms of assembly, heterotrimer of A, B and C subunits.

The enzyme catalyses L-glutamyl-tRNA(Gln) + L-glutamine + ATP + H2O = L-glutaminyl-tRNA(Gln) + L-glutamate + ADP + phosphate + H(+). It carries out the reaction L-aspartyl-tRNA(Asn) + L-glutamine + ATP + H2O = L-asparaginyl-tRNA(Asn) + L-glutamate + ADP + phosphate + 2 H(+). Allows the formation of correctly charged Asn-tRNA(Asn) or Gln-tRNA(Gln) through the transamidation of misacylated Asp-tRNA(Asn) or Glu-tRNA(Gln) in organisms which lack either or both of asparaginyl-tRNA or glutaminyl-tRNA synthetases. The reaction takes place in the presence of glutamine and ATP through an activated phospho-Asp-tRNA(Asn) or phospho-Glu-tRNA(Gln). The polypeptide is Aspartyl/glutamyl-tRNA(Asn/Gln) amidotransferase subunit B (Clostridium kluyveri (strain ATCC 8527 / DSM 555 / NBRC 12016 / NCIMB 10680 / K1)).